Consider the following 756-residue polypeptide: 1,4-alpha-glucan branching enzyme GlgB (756 aa).

Residue Asp431 is the Nucleophile of the active site. Glu484 (proton donor) is an active-site residue.

Belongs to the glycosyl hydrolase 13 family. GlgB subfamily. Monomer.

It catalyses the reaction Transfers a segment of a (1-&gt;4)-alpha-D-glucan chain to a primary hydroxy group in a similar glucan chain.. It functions in the pathway glycan biosynthesis; glycogen biosynthesis. Catalyzes the formation of the alpha-1,6-glucosidic linkages in glycogen by scission of a 1,4-alpha-linked oligosaccharide from growing alpha-1,4-glucan chains and the subsequent attachment of the oligosaccharide to the alpha-1,6 position. The polypeptide is 1,4-alpha-glucan branching enzyme GlgB (Prochlorococcus marinus (strain MIT 9303)).